A 638-amino-acid polypeptide reads, in one-letter code: Methyl-accepting chemotaxis protein McpQ (638 aa).

Residues 18–38 form a helical membrane-spanning segment; that stretch reads LGLGFGLVLLLTLAITLTGWH. One can recognise an HBM domain in the interval 45–282; it reads DRGDKLGNIS…SQTEVRDAAA (238 aa). The helical transmembrane segment at 287–307 threads the bilayer; the sequence is TLLTVATVLALALGLLAAWAI. The HAMP domain maps to 309–361; the sequence is RQIIIPLRQTLRAAERVASGDLTQSLQVQRRDELGQLQASMHRMTQGLRELIG. Residues 366-602 form the Methyl-accepting transducer domain; sequence GVTQIASAAE…EINRSVMNVR (237 aa).

The protein belongs to the methyl-accepting chemotaxis (MCP) protein family.

The protein resides in the cell membrane. In terms of biological role, chemotactic-signal transducers respond to changes in the concentration of attractants and repellents in the environment, transduce a signal from the outside to the inside of the cell, and facilitate sensory adaptation through the variation of the level of methylation. McpQ recognizes specifically citrate and citrate/metal(2+) complexes. Binds citrate/metal(2+) complexes with higher affinity than free citrate, and mediates preferentially chemotaxis toward citrate/metal(2+) complexes. The chain is Methyl-accepting chemotaxis protein McpQ from Pseudomonas putida (strain ATCC 47054 / DSM 6125 / CFBP 8728 / NCIMB 11950 / KT2440).